The chain runs to 247 residues: Tetraspanin-18 (247 aa).

The Cytoplasmic portion of the chain corresponds to 1 to 15 (MEGDCLSCMKYLMFL). A helical transmembrane segment spans residues 16-36 (FNFFIFLGGACLLGVGIWVIV). Topologically, residues 37-49 (DPTGFREIVAANP) are extracellular. A helical membrane pass occupies residues 50–70 (LLFTGAYIMLAMGAMLFLLGF). The Cytoplasmic segment spans residues 71–82 (LGCCGAIRENKC). A helical membrane pass occupies residues 83-103 (LLLFFFMFILLIFLAELSAAI). Topologically, residues 104–222 (LAFIFRENLT…SFETYVYLAG (119 aa)) are extracellular. 2 N-linked (GlcNAc...) asparagine glycosylation sites follow: Asn111 and Asn129. A helical membrane pass occupies residues 223–243 (ALAIGVLAIELFAMIFAMCLF). The Cytoplasmic segment spans residues 244-247 (RGIQ).

Belongs to the tetraspanin (TM4SF) family.

It is found in the membrane. In terms of biological role, maintains CDH6 protein and promotes CDH6-dependent adherens junctions, inhibiting neural crest migration. The sequence is that of Tetraspanin-18 from Gallus gallus (Chicken).